The chain runs to 534 residues: Peptide chain release factor 3 (534 aa).

The 270-residue stretch at 9-278 (ARRRTFAIIS…FFIEHAPPPQ (270 aa)) folds into the tr-type G domain. GTP contacts are provided by residues 18 to 25 (SHPDAGKT), 86 to 90 (DTPGH), and 140 to 143 (NKLD).

Belongs to the TRAFAC class translation factor GTPase superfamily. Classic translation factor GTPase family. PrfC subfamily.

It is found in the cytoplasm. Functionally, increases the formation of ribosomal termination complexes and stimulates activities of RF-1 and RF-2. It binds guanine nucleotides and has strong preference for UGA stop codons. It may interact directly with the ribosome. The stimulation of RF-1 and RF-2 is significantly reduced by GTP and GDP, but not by GMP. This Xanthomonas oryzae pv. oryzae (strain MAFF 311018) protein is Peptide chain release factor 3.